The following is a 101-amino-acid chain: Small ribosomal subunit protein bS18c (101 aa).

This sequence belongs to the bacterial ribosomal protein bS18 family. In terms of assembly, part of the 30S ribosomal subunit.

It is found in the plastid. The protein localises to the chloroplast. This chain is Small ribosomal subunit protein bS18c, found in Solanum bulbocastanum (Wild potato).